The following is a 211-amino-acid chain: Lipoprotein signal peptidase (211 aa).

Transmembrane regions (helical) follow at residues 12–32 (LLAL…YLAV), 96–116 (AFRN…ILHY), and 127–147 (LQVA…DRLA). Residues D153 and D174 contribute to the active site. A helical transmembrane segment spans residues 167–187 (WPTFNIADSLIVVGVALLVLH).

It belongs to the peptidase A8 family.

It localises to the cell inner membrane. It carries out the reaction Release of signal peptides from bacterial membrane prolipoproteins. Hydrolyzes -Xaa-Yaa-Zaa-|-(S,diacylglyceryl)Cys-, in which Xaa is hydrophobic (preferably Leu), and Yaa (Ala or Ser) and Zaa (Gly or Ala) have small, neutral side chains.. Its pathway is protein modification; lipoprotein biosynthesis (signal peptide cleavage). Its function is as follows. This protein specifically catalyzes the removal of signal peptides from prolipoproteins. This Anaeromyxobacter sp. (strain Fw109-5) protein is Lipoprotein signal peptidase.